Reading from the N-terminus, the 188-residue chain is Putative manganese efflux pump MntP (188 aa).

6 helical membrane passes run 2–22 (IMGN…AFAV), 39–59 (LITG…GFLL), 67–87 (ITAI…LNMI), 107–127 (IILS…FAFL), 129–149 (VDIV…SFLG), and 166–186 (LAGG…HLGF).

The protein belongs to the MntP (TC 9.B.29) family.

Its subcellular location is the cell membrane. Its function is as follows. Probably functions as a manganese efflux pump. The polypeptide is Putative manganese efflux pump MntP (Desulfitobacterium hafniense (strain Y51)).